The sequence spans 229 residues: 5'-methylthioadenosine/S-adenosylhomocysteine nucleosidase (229 aa).

The active-site Proton acceptor is the E12. Substrate-binding positions include G78, I152, and 173 to 174 (ME). D197 (proton donor) is an active-site residue.

This sequence belongs to the PNP/UDP phosphorylase family. MtnN subfamily.

It catalyses the reaction S-adenosyl-L-homocysteine + H2O = S-(5-deoxy-D-ribos-5-yl)-L-homocysteine + adenine. The catalysed reaction is S-methyl-5'-thioadenosine + H2O = 5-(methylsulfanyl)-D-ribose + adenine. It carries out the reaction 5'-deoxyadenosine + H2O = 5-deoxy-D-ribose + adenine. The protein operates within amino-acid biosynthesis; L-methionine biosynthesis via salvage pathway; S-methyl-5-thio-alpha-D-ribose 1-phosphate from S-methyl-5'-thioadenosine (hydrolase route): step 1/2. In terms of biological role, catalyzes the irreversible cleavage of the glycosidic bond in both 5'-methylthioadenosine (MTA) and S-adenosylhomocysteine (SAH/AdoHcy) to adenine and the corresponding thioribose, 5'-methylthioribose and S-ribosylhomocysteine, respectively. Also cleaves 5'-deoxyadenosine, a toxic by-product of radical S-adenosylmethionine (SAM) enzymes, into 5-deoxyribose and adenine. This chain is 5'-methylthioadenosine/S-adenosylhomocysteine nucleosidase, found in Haemophilus influenzae (strain PittEE).